We begin with the raw amino-acid sequence, 532 residues long: 2,3-bisphosphoglycerate-independent phosphoglycerate mutase (532 aa).

Mn(2+) is bound by residues D15 and S65. Catalysis depends on S65, which acts as the Phosphoserine intermediate. Substrate contacts are provided by residues H126, 156-157, R188, R194, 258-261, and K331; these read RD and RPDR. D398, H402, D439, H440, and H457 together coordinate Mn(2+).

Belongs to the BPG-independent phosphoglycerate mutase family. In terms of assembly, monomer. Mn(2+) serves as cofactor.

It catalyses the reaction (2R)-2-phosphoglycerate = (2R)-3-phosphoglycerate. The protein operates within carbohydrate degradation; glycolysis; pyruvate from D-glyceraldehyde 3-phosphate: step 3/5. Functionally, catalyzes the interconversion of 2-phosphoglycerate and 3-phosphoglycerate. The protein is 2,3-bisphosphoglycerate-independent phosphoglycerate mutase of Trichodesmium erythraeum (strain IMS101).